The following is a 28-amino-acid chain: Kalata-B12 (28 aa).

The segment at residues 1–28 is a cross-link (cyclopeptide (Gly-Asp)); it reads GSLCGDTCFVLGCNDSSCSCNYPICVKD. Disulfide bonds link Cys4–Cys18, Cys8–Cys20, and Cys13–Cys25.

This is a cyclic peptide.

Functionally, probably participates in a plant defense mechanism. The protein is Kalata-B12 of Oldenlandia affinis.